The following is a 499-amino-acid chain: Glycerol kinase (499 aa).

Thr13 provides a ligand contact to ADP. The ATP site is built by Thr13, Thr14, and Ser15. Thr13 provides a ligand contact to sn-glycerol 3-phosphate. Arg17 provides a ligand contact to ADP. Positions 83, 84, 135, and 245 each coordinate sn-glycerol 3-phosphate. 5 residues coordinate glycerol: Arg83, Glu84, Tyr135, Asp245, and Gln246. The ADP site is built by Thr267 and Gly310. Residues Thr267, Gly310, Gln314, and Ala411 each contribute to the ATP site. ADP-binding residues include Ala411 and Asn415.

Belongs to the FGGY kinase family.

The catalysed reaction is glycerol + ATP = sn-glycerol 3-phosphate + ADP + H(+). It participates in polyol metabolism; glycerol degradation via glycerol kinase pathway; sn-glycerol 3-phosphate from glycerol: step 1/1. With respect to regulation, inhibited by fructose 1,6-bisphosphate (FBP). Key enzyme in the regulation of glycerol uptake and metabolism. Catalyzes the phosphorylation of glycerol to yield sn-glycerol 3-phosphate. This Xylella fastidiosa (strain M12) protein is Glycerol kinase.